Here is a 351-residue protein sequence, read N- to C-terminus: Photosystem II D2 protein (351 aa).

A helical transmembrane segment spans residues 39–59 (TAYLAIGGWLTGTTFVTSWYT). Histidine 116 provides a ligand contact to chlorophyll a. The helical transmembrane segment at 123–139 (GFMLRQFEIARLVGIRP) threads the bilayer. The pheophytin a site is built by glutamine 128 and asparagine 141. The chain crosses the membrane as a helical span at residues 151–164 (VFVSVFLMYPLGQS). Histidine 196 serves as a coordination point for chlorophyll a. A helical membrane pass occupies residues 206–226 (GALLCAIHGATVENTLFEDGE). 2 residues coordinate a plastoquinone: histidine 213 and phenylalanine 260. Histidine 213 is a binding site for Fe cation. Histidine 267 lines the Fe cation pocket. A helical transmembrane segment spans residues 277 to 293 (GLWTSSIGIIGLALNLR).

Belongs to the reaction center PufL/M/PsbA/D family. As to quaternary structure, PSII is composed of 1 copy each of membrane proteins PsbA, PsbB, PsbC, PsbD, PsbE, PsbF, PsbH, PsbI, PsbJ, PsbK, PsbL, PsbM, PsbT, PsbX, PsbY, PsbZ, Psb30/Ycf12, peripheral proteins PsbO, CyanoQ (PsbQ), PsbU, PsbV and a large number of cofactors. It forms dimeric complexes. It depends on The D1/D2 heterodimer binds P680, chlorophylls that are the primary electron donor of PSII, and subsequent electron acceptors. It shares a non-heme iron and each subunit binds pheophytin, quinone, additional chlorophylls, carotenoids and lipids. There is also a Cl(-1) ion associated with D1 and D2, which is required for oxygen evolution. The PSII complex binds additional chlorophylls, carotenoids and specific lipids. as a cofactor.

It is found in the cellular thylakoid membrane. It carries out the reaction 2 a plastoquinone + 4 hnu + 2 H2O = 2 a plastoquinol + O2. Its function is as follows. Photosystem II (PSII) is a light-driven water:plastoquinone oxidoreductase that uses light energy to abstract electrons from H(2)O, generating O(2) and a proton gradient subsequently used for ATP formation. It consists of a core antenna complex that captures photons, and an electron transfer chain that converts photonic excitation into a charge separation. The D1/D2 (PsbA/PsbD) reaction center heterodimer binds P680, the primary electron donor of PSII as well as several subsequent electron acceptors. D2 is needed for assembly of a stable PSII complex. In Synechococcus sp. (strain CC9605), this protein is Photosystem II D2 protein.